The following is a 377-amino-acid chain: Chaperone protein DnaJ (377 aa).

A J domain is found at 5–70; sequence DYYQVLGVSR…KKRSAYDQLG (66 aa). The CR-type zinc-finger motif lies at 138–216; that stretch reads GVTKIISFKT…CYGEGRYINT (79 aa). Zn(2+)-binding residues include C151, C154, C168, C171, C190, C193, C204, and C207. CXXCXGXG motif repeat units lie at residues 151-158, 168-175, 190-197, and 204-211; these read CEACTGKG, CPTCRGSG, CQTCRGAG, and CTKCYGEG.

It belongs to the DnaJ family. Homodimer. Zn(2+) is required as a cofactor.

Its subcellular location is the cytoplasm. In terms of biological role, participates actively in the response to hyperosmotic and heat shock by preventing the aggregation of stress-denatured proteins and by disaggregating proteins, also in an autonomous, DnaK-independent fashion. Unfolded proteins bind initially to DnaJ; upon interaction with the DnaJ-bound protein, DnaK hydrolyzes its bound ATP, resulting in the formation of a stable complex. GrpE releases ADP from DnaK; ATP binding to DnaK triggers the release of the substrate protein, thus completing the reaction cycle. Several rounds of ATP-dependent interactions between DnaJ, DnaK and GrpE are required for fully efficient folding. Also involved, together with DnaK and GrpE, in the DNA replication of plasmids through activation of initiation proteins. The polypeptide is Chaperone protein DnaJ (Orientia tsutsugamushi (strain Ikeda) (Rickettsia tsutsugamushi)).